We begin with the raw amino-acid sequence, 169 residues long: Peptide methionine sulfoxide reductase MsrA (169 aa).

Residue Cys-10 is part of the active site.

This sequence belongs to the MsrA Met sulfoxide reductase family.

The catalysed reaction is L-methionyl-[protein] + [thioredoxin]-disulfide + H2O = L-methionyl-(S)-S-oxide-[protein] + [thioredoxin]-dithiol. It catalyses the reaction [thioredoxin]-disulfide + L-methionine + H2O = L-methionine (S)-S-oxide + [thioredoxin]-dithiol. Functionally, has an important function as a repair enzyme for proteins that have been inactivated by oxidation. Catalyzes the reversible oxidation-reduction of methionine sulfoxide in proteins to methionine. This Streptococcus equi subsp. zooepidemicus (strain H70) protein is Peptide methionine sulfoxide reductase MsrA.